A 76-amino-acid polypeptide reads, in one-letter code: uncharacterized protein (76 aa).

The protein to K.pneumoniae LtrA, E.coli YjiE, and YhcS.

This is an uncharacterized protein from Escherichia coli O6:H1 (strain CFT073 / ATCC 700928 / UPEC).